The chain runs to 1331 residues: Retrotransposon-like protein 1 (1331 aa).

4 disordered regions span residues 1-123 (MMEP…SQED), 128-147 (TDLA…SSTV), 556-595 (EADE…ETFY), and 971-1033 (PSSE…DEPN). A compositionally biased stretch (low complexity) spans 19–30 (SSKQMESSEGSS). 3 stretches are compositionally biased toward acidic residues: residues 109 to 123 (EMEE…SQED), 128 to 143 (TDLA…EEPD), and 569 to 578 (GSDDLSESEP). Over residues 992 to 1001 (RRVATTTRPT) the composition is skewed to low complexity. Residues 1015–1024 (PESEDEEESE) show a composition bias toward acidic residues. A run of 2 helical transmembrane segments spans residues 1070–1090 (FYRS…LVML) and 1117–1137 (LFLD…TQLF). The tract at residues 1309–1331 (SPPREGATLEELPSDADEDAGLD) is disordered. Residues 1320 to 1331 (LPSDADEDAGLD) are compositionally biased toward acidic residues.

It localises to the membrane. Its function is as follows. Plays an essential role in capillaries endothelial cells for the maintenance of feto-maternal interface and for development of the placenta. This chain is Retrotransposon-like protein 1 (RTL1), found in Bos taurus (Bovine).